The sequence spans 156 residues: MGVFAFEDEHPSAVAQAKLFKALTKDSDDIIPKVIEQIQSVEIVEGNGGPGTVKKITASHGGHTSYVLHKIDAIDEASFEYNYSIVGGTGLDESLEKITFESKLLSGPDGGSIGKIKVKFHTKGDVLSDAVREEAKARGTGLFKAVEGYVLANPNY.

D8 and D28 together coordinate trans-zeatin. The Ca(2+) site is built by P32 and I38. Trans-zeatin contacts are provided by K54, E133, and K136.

Belongs to the BetVI family. Ubiquitous, with higher levels in roots.

The protein localises to the cytoplasm. The protein resides in the cytosol. Its function is as follows. Class II ribonuclease (RNase), with low activity on single-strand RNA. Binds to cytokinins. Interacts with melatonin. This chain is Protein LlR18B (LLR18B), found in Lupinus luteus (European yellow lupine).